The sequence spans 75 residues: Endogenous retrovirus group K member 5 Np9 protein (75 aa).

Residues 22–43 (TAPKRQRPSRTGHDDDGGFVEK) are disordered. The segment covering 32 to 43 (TGHDDDGGFVEK) has biased composition (basic and acidic residues).

The protein resides in the nucleus. May possess a function in tumorigenesis. This Homo sapiens (Human) protein is Endogenous retrovirus group K member 5 Np9 protein (ERVK-5).